A 129-amino-acid chain; its full sequence is Lysozyme C, milk isozyme (129 aa).

The C-type lysozyme domain maps to 1 to 129 (KIFSKCELAR…LSKYLASCNL (129 aa)). Intrachain disulfides connect Cys-6–Cys-127, Cys-30–Cys-115, Cys-65–Cys-80, and Cys-76–Cys-94. Active-site residues include Glu-35 and Asp-53. Ca(2+) contacts are provided by Lys-82, Asp-85, Asn-87, Asp-90, and Asp-91.

Belongs to the glycosyl hydrolase 22 family. As to quaternary structure, monomer. Ca(2+) serves as cofactor.

It carries out the reaction Hydrolysis of (1-&gt;4)-beta-linkages between N-acetylmuramic acid and N-acetyl-D-glucosamine residues in a peptidoglycan and between N-acetyl-D-glucosamine residues in chitodextrins.. Functionally, lysozymes have primarily a bacteriolytic function; those in tissues and body fluids are associated with the monocyte-macrophage system and enhance the activity of immunoagents. This chain is Lysozyme C, milk isozyme, found in Canis lupus familiaris (Dog).